A 680-amino-acid chain; its full sequence is Lipase 1 (680 aa).

A signal peptide spans 1–34 (MKSQNKYSIRKFSVGASSILIATLLFLSGGQAQA). A propeptide spanning residues 35 to 290 (AEKQVNMGNS…AKAKDDQTNK (256 aa)) is cleaved from the precursor. Residues 82-259 (KNLHNDKTIS…PTKDNDKKNG (178 aa)) are disordered. Over residues 84-111 (LHNDKTISEENHRKTDDLNKDQLKDDKN) the composition is skewed to basic and acidic residues. Polar residues-rich tracts occupy residues 125–138 (KNNN…NQGL), 162–193 (SQDS…SQRE), and 204–223 (QPQQ…FNNE). Over residues 224 to 234 (QEVKPQKDEKT) the composition is skewed to basic and acidic residues. A compositionally biased stretch (polar residues) spans 235–246 (LSVSDLKNNQKS). S408 functions as the Nucleophile in the catalytic mechanism. D600 acts as the Charge relay system in catalysis. D638 is a Ca(2+) binding site. Residue H639 is the Charge relay system of the active site. Residues D641, D646, and D649 each contribute to the Ca(2+) site.

The protein belongs to the AB hydrolase superfamily. Lipase family.

Its subcellular location is the secreted. It carries out the reaction a triacylglycerol + H2O = a diacylglycerol + a fatty acid + H(+). The sequence is that of Lipase 1 (lip1) from Staphylococcus aureus (strain Mu50 / ATCC 700699).